Reading from the N-terminus, the 396-residue chain is Elongation factor Tu (396 aa).

Residues K10–E205 form the tr-type G domain. The segment at G19–T26 is G1. GTP is bound at residue G19 to T26. T26 contacts Mg(2+). Positions G61–S65 are G2. The segment at D82–G85 is G3. GTP is bound by residues D82 to H86 and N137 to D140. A G4 region spans residues N137–D140. The interval S175–L177 is G5.

This sequence belongs to the TRAFAC class translation factor GTPase superfamily. Classic translation factor GTPase family. EF-Tu/EF-1A subfamily. As to quaternary structure, monomer.

Its subcellular location is the cytoplasm. It carries out the reaction GTP + H2O = GDP + phosphate + H(+). Its function is as follows. GTP hydrolase that promotes the GTP-dependent binding of aminoacyl-tRNA to the A-site of ribosomes during protein biosynthesis. This chain is Elongation factor Tu, found in Bacillus velezensis (strain DSM 23117 / BGSC 10A6 / LMG 26770 / FZB42) (Bacillus amyloliquefaciens subsp. plantarum).